Consider the following 845-residue polypeptide: Molybdenum cofactor sulfurase (845 aa).

Position 240 is an N6-(pyridoxal phosphate)lysine (K240). C404 is a catalytic residue. Residues 666–840 form the MOSC domain; sequence SFPQDSSPSS…LMVGDTVTPS (175 aa).

The protein belongs to the class-V pyridoxal-phosphate-dependent aminotransferase family. MOCOS subfamily. It depends on pyridoxal 5'-phosphate as a cofactor.

The catalysed reaction is Mo-molybdopterin + L-cysteine + AH2 = thio-Mo-molybdopterin + L-alanine + A + H2O. It participates in cofactor biosynthesis; molybdopterin biosynthesis. Sulfurates the molybdenum cofactor. Sulfation of molybdenum is essential for xanthine dehydrogenase (XDH) and aldehyde oxidase (ADO) enzymes in which molybdenum cofactor is liganded by 1 oxygen and 1 sulfur atom in active form. This chain is Molybdenum cofactor sulfurase, found in Aspergillus clavatus (strain ATCC 1007 / CBS 513.65 / DSM 816 / NCTC 3887 / NRRL 1 / QM 1276 / 107).